Consider the following 124-residue polypeptide: TP53-target gene 3 protein (124 aa).

Polar residues predominate over residues 1-11 (MRASPCISQPA). Residues 1–42 (MRASPCISQPAASWHPRPSALRPTAGSGPDTRTPGTVEDGSA) are disordered.

In terms of tissue distribution, strongly expressed in testis. Weakly expressed in heart, placenta and skeletal muscle.

The protein localises to the cytoplasm. Its subcellular location is the nucleus. In terms of biological role, may play a significant role in p53/TP53-mediating signaling pathway. The protein is TP53-target gene 3 protein of Homo sapiens (Human).